A 137-amino-acid polypeptide reads, in one-letter code: Putative pre-16S rRNA nuclease (137 aa).

Belongs to the YqgF nuclease family.

It is found in the cytoplasm. In terms of biological role, could be a nuclease involved in processing of the 5'-end of pre-16S rRNA. The sequence is that of Putative pre-16S rRNA nuclease from Mycoplasmopsis synoviae (strain 53) (Mycoplasma synoviae).